A 214-amino-acid chain; its full sequence is 3-isopropylmalate dehydratase small subunit (214 aa).

Belongs to the LeuD family. LeuD type 1 subfamily. As to quaternary structure, heterodimer of LeuC and LeuD.

It catalyses the reaction (2R,3S)-3-isopropylmalate = (2S)-2-isopropylmalate. It participates in amino-acid biosynthesis; L-leucine biosynthesis; L-leucine from 3-methyl-2-oxobutanoate: step 2/4. Catalyzes the isomerization between 2-isopropylmalate and 3-isopropylmalate, via the formation of 2-isopropylmaleate. The protein is 3-isopropylmalate dehydratase small subunit of Pseudomonas entomophila (strain L48).